A 2776-amino-acid chain; its full sequence is Microtubule-associated protein 1A (2776 aa).

Serine 114, serine 117, serine 118, serine 121, and serine 155 each carry phosphoserine. The residue at position 177 (tyrosine 177) is a Phosphotyrosine. The segment at 310 to 331 (PSKIKHRADSKESLKAAPKTAM) is disordered. Phosphoserine occurs at positions 319 and 322. Repeat 1 spans residues 336–338 (KRE). The 11 X 3 AA approximate repeats of K-K-[DE] stretch occupies residues 336 to 541 (KREEVLEEGA…TQDFEELKRE (206 aa)). Residues 345 to 390 (AKEARSELAKELAKSEKKAKEPSEKPPEKPSKPERVRTESSEALKA) are compositionally biased toward basic and acidic residues. Disordered regions lie at residues 345-678 (AKEA…KAES), 738-809 (TIPG…TELT), 846-1076 (EDQS…AGGQ), 1094-1210 (ETGE…ESLG), 1223-1651 (EKGP…SPEQ), 1685-1729 (DGQG…FKDF), 1744-1848 (LAES…APFS), and 1866-2648 (AELE…NGLK). Residue serine 384 is modified to Phosphoserine. Positions 391 to 406 (EKRKLIKDKVGKKHLK) are enriched in basic residues. Composition is skewed to basic and acidic residues over residues 407-464 (EKIS…KPDL) and 484-500 (LKVDKGRAARGEKELSS). 9 repeat units span residues 415-417 (KRD), 420-422 (KKE), 424-426 (KKE), 427-429 (RKE), 431-433 (KKE), 436-438 (RKE), 440-442 (KKD), 444-446 (KKD), and 449-451 (RKD). Residue threonine 504 is modified to Phosphothreonine. Serine 526 and serine 527 each carry phosphoserine. Over residues 536-556 (EELKREERGLLAEPRDTELGE) the composition is skewed to basic and acidic residues. The stretch at 539–541 (KRE) is repeat 11. Residues 567-579 (GRPSTAIQVTQPP) are compositionally biased toward polar residues. Positions 587–631 (QVEREKEVVPDFPEDKGSKNRAPDSGAEVEREKETWEERKPREAE) are enriched in basic and acidic residues. Phosphoserine is present on residues serine 604 and serine 611. Threonine 633 is subject to Phosphothreonine. The segment covering 640–667 (AREESEPEVKEDVIEKAELEEMEEVHPS) has biased composition (basic and acidic residues). Phosphoserine occurs at positions 644, 667, 678, and 786. Composition is skewed to polar residues over residues 785 to 800 (ASQSAESAVPASSSKT), 846 to 859 (EDQSVASLTAPQTE), and 870 to 882 (TVTSIPSSRTEAT). Phosphoserine is present on residues serine 873, serine 876, serine 877, and serine 890. Threonine 893 carries the phosphothreonine modification. A phosphoserine mark is found at serine 895, serine 899, and serine 908. Polar residues predominate over residues 944–954 (VTTSEKLSSQY). A phosphoserine mark is found at serine 981, serine 991, serine 999, serine 1008, serine 1014, serine 1023, and serine 1062. Residue threonine 1068 is modified to Phosphothreonine. Low complexity predominate over residues 1096 to 1105 (GEAGAASGAG). The segment covering 1112–1124 (RTQEPAEPQKDEL) has biased composition (basic and acidic residues). Phosphoserine is present on residues serine 1131, serine 1133, serine 1147, serine 1159, serine 1177, serine 1187, serine 1190, serine 1196, serine 1205, and serine 1208. Residues 1179 to 1189 (EDTQSLSFSEE) are compositionally biased toward polar residues. Residues 1197–1210 (LDISSKQLSPESLG) show a composition bias toward polar residues. Over residues 1223-1234 (EKGPLVKAEDNS) the composition is skewed to basic and acidic residues. Serine 1251, serine 1289, serine 1310, serine 1313, and serine 1316 each carry phosphoserine. The span at 1302–1317 (TSDSSLTKSPESLSSP) shows a compositional bias: low complexity. Basic and acidic residues-rich tracts occupy residues 1332 to 1350 (GSEDRATEQKEKELERKSE), 1370 to 1384 (SVMHQKDEALDEENK), 1391 to 1435 (KTSE…KALE), 1449 to 1488 (PRARAQEHRDLEQKDEHLELRDKTPEEKDKVLVLEDRAPE), 1499 to 1541 (RAPE…DQDN), and 1549 to 1599 (GTLK…EKTR). 3 positions are modified to phosphoserine: serine 1516, serine 1580, and serine 1606. The span at 1609-1625 (EEGKAREQEEKYWKEQD) shows a compositional bias: basic and acidic residues. Phosphoserine occurs at positions 1634 and 1648. Polar residues predominate over residues 1709 to 1718 (QEITPLQHTP). Residues serine 1720, serine 1747, serine 1762, serine 1768, and serine 1772 each carry the phosphoserine modification. Threonine 1777 carries the post-translational modification Phosphothreonine. Phosphoserine occurs at positions 1783 and 1789. Polar residues predominate over residues 1794–1808 (TKSTPPTRNEPTTPS). Residues 1823–1844 (LPPAPLSPAPAPPTPAPDPHAP) show a composition bias toward pro residues. Over residues 1878 to 1890 (KDYRKAEGEREGE) the composition is skewed to basic and acidic residues. Serine 1902 carries the phosphoserine modification. Composition is skewed to basic and acidic residues over residues 1907–1935 (EVTESHTTRDAEQTEPEQREPTPYPDERS) and 1972–1988 (STKEEAAGRNKSAEKEL). A Phosphothreonine modification is found at threonine 1928. Residues 1990–2006 (SAVSPPNLHSDTPTFSY) show a composition bias toward polar residues. The residue at position 1993 (serine 1993) is a Phosphoserine. Residues 2013–2039 (TIPPRQEPEPGPNVEPSFTPPAVPPRA) show a composition bias toward pro residues. A Phosphothreonine modification is found at threonine 2031. Residues 2042 to 2058 (SLSQDPSPPLNGSTTSC) show a composition bias toward polar residues. Serine 2048 and serine 2082 each carry phosphoserine. Residues 2060-2096 (PDRRTPSPKEAGRSHWDDGTNDSDLEKGAREQPEKET) show a composition bias toward basic and acidic residues. A compositionally biased stretch (pro residues) spans 2149–2158 (PAPPQLPSPA). Phosphoserine occurs at positions 2209, 2226, 2230, 2233, and 2234. Positions 2231–2242 (EGSSSEATTPVI) are enriched in polar residues. A compositionally biased stretch (low complexity) spans 2279–2292 (PLSPAPLASRDLAP). Basic and acidic residues predominate over residues 2355–2367 (AEKEEAEALHAWE). Serine 2425 is subject to Phosphoserine. Residues 2478–2490 (SASDSGSSQSDSD) are compositionally biased toward low complexity. The span at 2535–2551 (DPPPAPLPDPRPPPPRP) shows a compositional bias: pro residues. The segment covering 2566–2576 (GRVERLREKVQ) has biased composition (basic and acidic residues). A phosphoserine mark is found at serine 2623 and serine 2637.

This sequence belongs to the MAP1 family. 3 different light chains, LC1 (a cleavage product of MAP1B), LC2 (a cleavage product of MAP1A) and LC3 (produced by one of the MAP1LC3 genes), can associate with the MAP1A or MAP1B heavy chains. Interacts with guanylate kinase-like domain of DLG1, DLG2 and DLG4. Binds to CSNK1D. Interacts with TIAM2. As to quaternary structure, interacts with ELAVL4. In terms of processing, phosphorylated by CSNK1D. LC2 is generated from MAP1A by proteolytic processing. It is free to associate with both MAP1A and MAP1B. As to expression, both isoforms highly expressed in brain, and to a lesser extent in embryo. Isoform 1 is also expressed at a low level in other tissues including heart and muscle.

The protein resides in the cytoplasm. It localises to the cytoskeleton. In terms of biological role, structural protein involved in the filamentous cross-bridging between microtubules and other skeletal elements. In Mus musculus (Mouse), this protein is Microtubule-associated protein 1A (Map1a).